The sequence spans 523 residues: Magnesium/proton exchanger 1 (523 aa).

Transmembrane regions (helical) follow at residues 24–44 (LLPI…CFIG), 88–108 (IADV…LATI), 125–145 (GTLV…CVVM), 157–177 (LGVW…LYII), 185–205 (VITL…LLHA), 325–345 (VIGI…AFVP), 349–369 (IAHG…IAYG), 377–397 (ISCV…AAGT), 428–448 (VNIY…NYFV), 461–481 (LSFS…VLVL), and 495–515 (MWAW…VVLS).

The protein belongs to the Ca(2+):cation antiporter (CaCA) (TC 2.A.19) family. MHX subfamily.

It is found in the vacuole membrane. Vacuolar transporter that exchanges protons with Mg(2+), Zn(2+) and Fe(2+) ions. May control the partitioning of Mg(2+) and Zn(2+) between plant organs. This chain is Magnesium/proton exchanger 1 (MHX1), found in Oryza sativa subsp. japonica (Rice).